The primary structure comprises 237 residues: DCN1-like protein 5 (237 aa).

S41 carries the phosphoserine; by IKKA modification. Residues 46 to 232 (FSRKKCLAWF…LLDEFVEWQK (187 aa)) enclose the DCUN1 domain.

In terms of assembly, part of a complex that contains DCUN1D5, CUL1 and RBX1; this interaction is bridged by CUL1. Interacts (via the DCUN1 domain) with the unneddylated cullins: interacts with CUL1, CUL2, CUL3, CUL4A, CUL4B and CUL5; these interactions promote the cullin neddylation and the identity of the cullin dictates the affinity of the interaction. Interacts (via DCUN1 domain) with UBE2M (N-terminally acetylated form) and probably with UBE2F (N-terminally acetylated form). May also interact with regulators or subunits of cullin-RING ligases such as RBX1, RNF7, ELOB and DDB1; these interactions are bridged by cullins. Interacts with CAND1; this interaction is bridged by cullins and strongly inhibits the neddylation of cullins. These CAND-cullin-DCNL complexes can only be neddylated in the presence of a substrate adapter. In terms of processing, phosphorylation at Ser-41 is independent of cullin's interaction. Phosphorylated in response to both TICAM1 and MYD88 dependent Toll-like receptor (TLR) pathway activation. Phosphorylated in response to IL1B stimulation. As to expression, highly expressed in testis. Lower levels of expression in skin, thymus, spleen, lymph nodes, lung, brain, heart, skeletal muscles, kidney, liver an ovary.

It is found in the nucleus. It localises to the cytoplasm. The protein localises to the cytoskeleton. The protein resides in the spindle. In terms of biological role, contributes to the neddylation of all cullins by transferring NEDD8 from N-terminally acetylated NEDD8-conjugating E2s enzyme to different cullin C-terminal domain-RBX complexes which is necessary for the activation of cullin-RING E3 ubiquitin ligases (CRLs). May play a role in DNA damage response and may participate in cell proliferation and anchorage-independent cell growth. The sequence is that of DCN1-like protein 5 from Mus musculus (Mouse).